Here is a 63-residue protein sequence, read N- to C-terminus: Large ribosomal subunit protein uL29 (63 aa).

This sequence belongs to the universal ribosomal protein uL29 family.

This is Large ribosomal subunit protein uL29 from Aliivibrio fischeri (strain ATCC 700601 / ES114) (Vibrio fischeri).